Reading from the N-terminus, the 171-residue chain is Large ribosomal subunit protein uL10 (171 aa).

This sequence belongs to the universal ribosomal protein uL10 family. In terms of assembly, part of the ribosomal stalk of the 50S ribosomal subunit. The N-terminus interacts with L11 and the large rRNA to form the base of the stalk. The C-terminus forms an elongated spine to which L12 dimers bind in a sequential fashion forming a multimeric L10(L12)X complex.

Its function is as follows. Forms part of the ribosomal stalk, playing a central role in the interaction of the ribosome with GTP-bound translation factors. The sequence is that of Large ribosomal subunit protein uL10 from Cereibacter sphaeroides (strain ATCC 17023 / DSM 158 / JCM 6121 / CCUG 31486 / LMG 2827 / NBRC 12203 / NCIMB 8253 / ATH 2.4.1.) (Rhodobacter sphaeroides).